Consider the following 117-residue polypeptide: Ribonuclease P protein component (117 aa).

Belongs to the RnpA family. In terms of assembly, consists of a catalytic RNA component (M1 or rnpB) and a protein subunit.

It catalyses the reaction Endonucleolytic cleavage of RNA, removing 5'-extranucleotides from tRNA precursor.. Its function is as follows. RNaseP catalyzes the removal of the 5'-leader sequence from pre-tRNA to produce the mature 5'-terminus. It can also cleave other RNA substrates such as 4.5S RNA. The protein component plays an auxiliary but essential role in vivo by binding to the 5'-leader sequence and broadening the substrate specificity of the ribozyme. The sequence is that of Ribonuclease P protein component from Thermotoga sp. (strain RQ2).